We begin with the raw amino-acid sequence, 1801 residues long: Laminin subunit beta-2 (1801 aa).

The signal sequence occupies residues 1–35 (MEWASGKPGRGRQGQPVPWELRLGLLLSVLAATLA). The Laminin N-terminal domain maps to 46–285 (SRGSCYPATG…ALYELVIRGN (240 aa)). The N-linked (GlcNAc...) asparagine glycan is linked to Asn-251. 19 cysteine pairs are disulfide-bonded: Cys-286/Cys-295, Cys-288/Cys-313, Cys-315/Cys-324, Cys-327/Cys-347, Cys-350/Cys-359, Cys-352/Cys-377, Cys-380/Cys-389, Cys-392/Cys-410, Cys-413/Cys-426, Cys-415/Cys-441, Cys-443/Cys-452, Cys-455/Cys-470, Cys-473/Cys-487, Cys-475/Cys-494, Cys-496/Cys-505, Cys-508/Cys-522, Cys-525/Cys-537, Cys-527/Cys-544, and Cys-546/Cys-555. 4 Laminin EGF-like domains span residues 286–349 (CFCY…ACRK), 350–412 (CECN…ACRP), 413–472 (CDCD…GCQR), and 473–524 (CQCN…GCRP). A glycan (N-linked (GlcNAc...) asparagine) is linked at Asn-371. The region spanning 525-555 (CDCDVGGALDPQCDEATGQCPCRPHMIGRRC) is the Laminin EGF-like 5; truncated domain. Positions 564-780 (RPFLDHLTWE…LLISASSLVY (217 aa)) constitute a Laminin IV type B domain. 32 disulfide bridges follow: Cys-786/Cys-798, Cys-788/Cys-805, Cys-807/Cys-816, Cys-819/Cys-831, Cys-834/Cys-846, Cys-836/Cys-853, Cys-855/Cys-864, Cys-867/Cys-877, Cys-880/Cys-889, Cys-882/Cys-896, Cys-899/Cys-908, Cys-911/Cys-927, Cys-930/Cys-946, Cys-932/Cys-957, Cys-959/Cys-968, Cys-971/Cys-986, Cys-989/Cys-1003, Cys-991/Cys-1010, Cys-1013/Cys-1022, Cys-1025/Cys-1038, Cys-1041/Cys-1061, Cys-1043/Cys-1068, Cys-1070/Cys-1079, Cys-1082/Cys-1095, Cys-1098/Cys-1110, Cys-1100/Cys-1117, Cys-1119/Cys-1128, Cys-1131/Cys-1143, Cys-1146/Cys-1158, Cys-1148/Cys-1165, Cys-1167/Cys-1176, and Cys-1179/Cys-1190. Laminin EGF-like domains are found at residues 786–833 (CQCD…GCQA), 834–879 (CQCS…NCRP), 880–929 (CVCN…QCRP), 930–988 (CPCP…RCQL), 989–1040 (CECS…SCHR), 1041–1097 (CTCN…GCQP), 1098–1145 (CACH…QCRA), and 1146–1192 (CDCD…ACHP). Asn-1088 is a glycosylation site (N-linked (GlcNAc...) asparagine). The tract at residues 1193 to 1412 (CHACFGDWDR…LSLTGVNELV (220 aa)) is domain II. The N-linked (GlcNAc...) asparagine glycan is linked to Asn-1252. Residues 1259 to 1306 (AKLVEATEGLRHEIGKTTERLTQLEAELTDVQDENFNANHALSGLERD) are a coiled coil. 2 N-linked (GlcNAc...) asparagine glycosylation sites follow: Asn-1311 and Asn-1351. Residues 1413–1445 (CGAPGDAPCATSPCGGAGCRDEDGQPRCGGLGC) form a domain alpha region. Residues 1446-1801 (SGAAATADLA…LQVQIYNTCQ (356 aa)) are domain I. The stretch at 1475–1529 (GILSRVSETRRQAEEAQQRAQAALDKANASRGQVEQANQELRELIQNVKDFLSQE) forms a coiled coil. N-linked (GlcNAc...) asparagine glycosylation occurs at Asn-1502. Ser-1535 carries the phosphoserine modification. Positions 1576–1793 (LAHTMGDVRR…RSVLQAINLQ (218 aa)) form a coiled coil. Residues 1684 to 1694 (ASTAEETAGSA) show a composition bias toward low complexity. Positions 1684–1703 (ASTAEETAGSAQSRAREAEK) are disordered.

As to quaternary structure, laminin is a complex glycoprotein, consisting of three different polypeptide chains (alpha, beta, gamma), which are bound to each other by disulfide bonds into a cross-shaped molecule comprising one long and three short arms with globules at each end. Beta-2 is a subunit of laminin-3 (laminin-121 or S-laminin), laminin-4 (laminin-221 or S-merosin), laminin-7 (laminin-321 or KS-laminin), laminin-9 (laminin-421), laminin-11 (laminin-521), laminin-14 (laminin-423) and laminin-15 (laminin-523). As to expression, found in the basement membranes (major component). S-laminin is concentrated in the synaptic cleft of the neuromuscular junction.

It localises to the secreted. Its subcellular location is the extracellular space. The protein localises to the extracellular matrix. The protein resides in the basement membrane. Its function is as follows. Binding to cells via a high affinity receptor, laminin is thought to mediate the attachment, migration and organization of cells into tissues during embryonic development by interacting with other extracellular matrix components. In Rattus norvegicus (Rat), this protein is Laminin subunit beta-2 (Lamb2).